Reading from the N-terminus, the 506-residue chain is Maturase K (506 aa).

Belongs to the intron maturase 2 family. MatK subfamily.

It localises to the plastid. The protein resides in the chloroplast. In terms of biological role, usually encoded in the trnK tRNA gene intron. Probably assists in splicing its own and other chloroplast group II introns. The chain is Maturase K from Atractylodes lancea (Atractylodes japonica).